Here is a 48-residue protein sequence, read N- to C-terminus: GTCKCDDDGPDVRTATFTGSTEFANCNESWEKCLAVYTPVASCCRKKK.

3 disulfides stabilise this stretch: Cys3–Cys43, Cys5–Cys33, and Cys26–Cys44.

This sequence belongs to the sea anemone sodium channel inhibitory toxin family. Type II subfamily.

It is found in the secreted. The protein localises to the nematocyst. Functionally, binds to site 3 of voltage-gated sodium channels and inhibits the inactivation process. The chain is Delta-stichotoxin-Hcr1b from Radianthus crispa (Leathery sea anemone).